Here is a 227-residue protein sequence, read N- to C-terminus: Cytidylate kinase (227 aa).

11-19 (GPSGAGKGT) is an ATP binding site.

Belongs to the cytidylate kinase family. Type 1 subfamily.

It localises to the cytoplasm. It carries out the reaction CMP + ATP = CDP + ADP. It catalyses the reaction dCMP + ATP = dCDP + ADP. The polypeptide is Cytidylate kinase (Pasteurella multocida (strain Pm70)).